We begin with the raw amino-acid sequence, 526 residues long: PTS system alpha-glucoside-specific EIICB component (526 aa).

Positions 1 to 417 (MLKHFQRLGG…YNVKTSGRED (417 aa)) constitute a PTS EIIC type-1 domain. Helical transmembrane passes span 12–32 (LFAP…TIIL), 59–79 (GWTV…IGLA), 88–108 (LAVL…LTFW), 132–152 (IKTL…TIYI), 173–193 (LVSA…CLVW), 200–220 (ISSL…LYTF), 224–244 (ILIP…GPAV), 274–294 (GGFA…ALAM), 305–325 (IVSG…ITEP), 330–350 (FLFI…TMAA), 355–375 (FGVV…WLPL), and 381–401 (GVMF…YLVF). A PTS EIIB type-1 domain is found at 447–526 (SGKAKAFLEA…ESFENLMEQN (80 aa)). Cysteine 469 acts as the Phosphocysteine intermediate; for EIIB activity in catalysis.

The protein localises to the cell membrane. The phosphoenolpyruvate-dependent sugar phosphotransferase system (sugar PTS), a major carbohydrate active -transport system, catalyzes the phosphorylation of incoming sugar substrates concomitantly with their translocation across the cell membrane. This system is involved in alpha-glucoside transport. The polypeptide is PTS system alpha-glucoside-specific EIICB component (malB) (Fusobacterium mortiferum).